The sequence spans 1040 residues: Multidrug resistance protein MdtB (1040 aa).

The next 12 helical transmembrane spans lie at 16 to 36 (FIMR…AGII), 347 to 367 (LMMA…NIPA), 369 to 389 (IIPG…MVFL), 396 to 416 (LTLM…IVVI), 440 to 460 (IGFT…PLLF), 472 to 492 (FAIT…TLTP), 537 to 557 (WLTL…WVFI), 863 to 883 (LGST…VLGI), 888 to 908 (FIHP…ALLA), 911 to 931 (IAGS…IGIV), 968 to 988 (ILMT…STGV), and 998 to 1018 (IGMV…TPVI).

It belongs to the resistance-nodulation-cell division (RND) (TC 2.A.6) family. MdtB subfamily. Part of a tripartite efflux system composed of MdtA, MdtB and MdtC. MdtB forms a heteromultimer with MdtC.

Its subcellular location is the cell inner membrane. The sequence is that of Multidrug resistance protein MdtB from Shigella boydii serotype 4 (strain Sb227).